The primary structure comprises 77 residues: Putative Fis-like DNA-binding protein (77 aa).

The segment at residues 53-72 (QSLAADYLGINRNTLRKKLQ) is a DNA-binding region (H-T-H motif).

It belongs to the transcriptional regulatory Fis family.

The polypeptide is Putative Fis-like DNA-binding protein (Ralstonia nicotianae (strain ATCC BAA-1114 / GMI1000) (Ralstonia solanacearum)).